Here is a 245-residue protein sequence, read N- to C-terminus: tRNA pseudouridine synthase A (245 aa).

The Nucleophile role is filled by D52. Y111 contacts substrate.

Belongs to the tRNA pseudouridine synthase TruA family. In terms of assembly, homodimer.

It catalyses the reaction uridine(38/39/40) in tRNA = pseudouridine(38/39/40) in tRNA. Formation of pseudouridine at positions 38, 39 and 40 in the anticodon stem and loop of transfer RNAs. This Rhodopseudomonas palustris (strain BisB5) protein is tRNA pseudouridine synthase A.